The chain runs to 126 residues: Topoisomerase I damage affected protein 2 (126 aa).

Serine 2 carries the N-acetylserine modification.

The protein belongs to the TDA2 family.

It is found in the cytoplasm. Its subcellular location is the cell projection. The polypeptide is Topoisomerase I damage affected protein 2 (TDA2) (Saccharomyces cerevisiae (strain JAY291) (Baker's yeast)).